The sequence spans 397 residues: Ribosomal RNA large subunit methyltransferase I (397 aa).

A PUA domain is found at 2–80 (SAAIYLVKGR…QDINRAFFVK (79 aa)).

The protein belongs to the methyltransferase superfamily. RlmI family.

The protein localises to the cytoplasm. It carries out the reaction cytidine(1962) in 23S rRNA + S-adenosyl-L-methionine = 5-methylcytidine(1962) in 23S rRNA + S-adenosyl-L-homocysteine + H(+). Its function is as follows. Specifically methylates the cytosine at position 1962 (m5C1962) of 23S rRNA. This is Ribosomal RNA large subunit methyltransferase I from Vibrio vulnificus (strain CMCP6).